A 121-amino-acid polypeptide reads, in one-letter code: UPF0295 protein OB0906 (121 aa).

2 consecutive transmembrane segments (helical) span residues 14–34 (IRTF…GGIL) and 43–63 (VIFF…YVWI).

The protein belongs to the UPF0295 family.

It localises to the cell membrane. This Oceanobacillus iheyensis (strain DSM 14371 / CIP 107618 / JCM 11309 / KCTC 3954 / HTE831) protein is UPF0295 protein OB0906.